Reading from the N-terminus, the 490-residue chain is GTPase Der (490 aa).

2 EngA-type G domains span residues 3-166 (PVVA…AEAM) and 200-373 (IKLA…DSAT). Residues 9–16 (GRPNVGKS), 56–60 (DTGGI), 118–121 (NKVD), 206–213 (GKPNVGKS), 253–257 (DTAGV), and 318–321 (NKWD) each bind GTP. The 85-residue stretch at 374 to 458 (RRVSTSMLTR…PIQLRFQEGG (85 aa)) folds into the KH-like domain.

It belongs to the TRAFAC class TrmE-Era-EngA-EngB-Septin-like GTPase superfamily. EngA (Der) GTPase family. As to quaternary structure, associates with the 50S ribosomal subunit.

GTPase that plays an essential role in the late steps of ribosome biogenesis. This is GTPase Der from Shewanella halifaxensis (strain HAW-EB4).